Consider the following 349-residue polypeptide: 3'-5' exoribonuclease 1 (349 aa).

Composition is skewed to basic and acidic residues over residues 1–10 (MEDPQSKEPA) and 22–35 (PRPEGGEEPPRPSP). The interval 1-48 (MEDPQSKEPAGEAVALALLESPRPEGGEEPPRPSPEETQQCKFDGQET) is disordered. Phosphoserine is present on residues S59 and S62. Residues 76-110 (INRMSKEELRAKLSEFKLETRGVKDVLKKRLKNYY) enclose the SAP domain. The 177-residue stretch at 130 to 306 (ICIIDFEATC…DDSKNIARIA (177 aa)) folds into the Exonuclease domain. Mg(2+)-binding residues include D134 and E136. E136 serves as the catalytic Proton acceptor. Residues E136 and A137 each coordinate AMP. D234 is a binding site for Mg(2+). H293 functions as the Proton acceptor in the catalytic mechanism. AMP is bound at residue H293. D298 provides a ligand contact to Mg(2+).

Identified in a histone pre-mRNA complex, at least composed of ERI1, LSM11, SLBP, SNRPB, SYNCRIP and YBX1. Interacts in a cooperative manner with SLBP to the mature 3'-end of histone mRNAs. Binds to 40S and 60S ribosomal subunits and to 80S assembled ribosomes. Found in a ternary complex with SLBP and the stem-loop structure of the 3'-end of histone mRNAs. Mg(2+) is required as a cofactor.

It localises to the cytoplasm. Its subcellular location is the nucleus. The protein resides in the nucleolus. The enzyme catalyses Exonucleolytic cleavage in the 3'- to 5'-direction to yield nucleoside 5'-phosphates.. Although it can bind simultaneously with SLBP to the 3'-end of histone mRNA, the presence of SLBP prevents the exonuclease activity. RNA exonuclease that binds to the 3'-end of histone mRNAs and degrades them, suggesting that it plays an essential role in histone mRNA decay after replication. A 2' and 3'-hydroxyl groups at the last nucleotide of the histone 3'-end is required for efficient 3'-end histone mRNA exonuclease activity and degradation of RNA substrates. Also able to degrade the 3'-overhangs of short interfering RNAs (siRNAs) in vitro, suggesting a possible role as regulator of RNA interference (RNAi). Required for binding the 5'-ACCCA-3' sequence present in stem-loop structure. Able to bind other mRNAs. Required for 5.8S rRNA 3'-end processing. Also binds to 5.8s ribosomal RNA. Binds with high affinity to the stem-loop structure of replication-dependent histone pre-mRNAs. In vitro, does not have sequence specificity. In vitro, has weak DNA exonuclease activity. In vitro, shows biphasic kinetics such that there is rapid hydrolysis of the last three unpaired RNA nucleotides in the 39 flanking sequence followed by a much slower cleavage through the stem that occurs over a longer incubation period in the order of hours. ERI1-mediated RNA metabolism plays a key role in chondrogenesis. This is 3'-5' exoribonuclease 1 from Homo sapiens (Human).